Reading from the N-terminus, the 200-residue chain is Large ribosomal subunit protein uL4 (200 aa).

Residues 43-67 (RAQKTRAEVSGSGKKPWRQKGTGRA) form a disordered region.

Belongs to the universal ribosomal protein uL4 family. Part of the 50S ribosomal subunit.

Functionally, one of the primary rRNA binding proteins, this protein initially binds near the 5'-end of the 23S rRNA. It is important during the early stages of 50S assembly. It makes multiple contacts with different domains of the 23S rRNA in the assembled 50S subunit and ribosome. Forms part of the polypeptide exit tunnel. This chain is Large ribosomal subunit protein uL4, found in Haemophilus influenzae (strain PittEE).